The chain runs to 85 residues: Large ribosomal subunit protein bL27 (85 aa).

Residues 1 to 20 form a disordered region; it reads MAHKKAGGSSRNGRDSEAKR.

It belongs to the bacterial ribosomal protein bL27 family.

The chain is Large ribosomal subunit protein bL27 from Aeromonas salmonicida (strain A449).